The chain runs to 343 residues: Major outer membrane protein (343 aa).

The signal sequence occupies residues M1–A20.

As to quaternary structure, disulfide bond interactions within and between MOMP molecules and other components form high molecular-weight oligomers.

The protein localises to the cell outer membrane. Structural rigidity of the outer membrane of elementary bodies and porin forming, permitting diffusion of solutes through the intracellular reticulate body membrane. This chain is Major outer membrane protein (ompH), found in Pasteurella multocida.